We begin with the raw amino-acid sequence, 159 residues long: Large ribosomal subunit protein uL15 (159 aa).

A disordered region spans residues 1–39 (MKLNELSPADGSTKKRMRVGRGVGSGKGKTAGRGVKGQN). A compositionally biased stretch (gly residues) spans 21–35 (RGVGSGKGKTAGRGV).

This sequence belongs to the universal ribosomal protein uL15 family. In terms of assembly, part of the 50S ribosomal subunit.

Functionally, binds to the 23S rRNA. In Hyphomonas neptunium (strain ATCC 15444), this protein is Large ribosomal subunit protein uL15.